We begin with the raw amino-acid sequence, 179 residues long: ATP-dependent protease subunit HslV (179 aa).

T7 is a catalytic residue. Na(+)-binding residues include G162, C165, and T168.

The protein belongs to the peptidase T1B family. HslV subfamily. A double ring-shaped homohexamer of HslV is capped on each side by a ring-shaped HslU homohexamer. The assembly of the HslU/HslV complex is dependent on binding of ATP.

The protein localises to the cytoplasm. The enzyme catalyses ATP-dependent cleavage of peptide bonds with broad specificity.. Its activity is regulated as follows. Allosterically activated by HslU binding. Functionally, protease subunit of a proteasome-like degradation complex believed to be a general protein degrading machinery. This Bordetella avium (strain 197N) protein is ATP-dependent protease subunit HslV.